We begin with the raw amino-acid sequence, 408 residues long: Phosphoglycerate kinase (408 aa).

Residues 28–30 (DIN), arginine 43, 66–69 (HQGR), arginine 123, and arginine 163 each bind substrate. ATP is bound by residues glutamate 334 and 358 to 361 (GGHT).

It belongs to the phosphoglycerate kinase family. In terms of assembly, monomer.

Its subcellular location is the cytoplasm. The catalysed reaction is (2R)-3-phosphoglycerate + ATP = (2R)-3-phospho-glyceroyl phosphate + ADP. Its pathway is carbohydrate degradation; glycolysis; pyruvate from D-glyceraldehyde 3-phosphate: step 2/5. The polypeptide is Phosphoglycerate kinase (Pyrobaculum aerophilum (strain ATCC 51768 / DSM 7523 / JCM 9630 / CIP 104966 / NBRC 100827 / IM2)).